The sequence spans 211 residues: Late expression factor 7 (211 aa).

Its function is as follows. Involved in late/very late gene activation. The sequence is that of Late expression factor 7 (LEF-7) from Orgyia pseudotsugata multicapsid polyhedrosis virus (OpMNPV).